The chain runs to 83 residues: Heterin-1 (83 aa).

The first 22 residues, 1–22 (MNGKLLLVSLMVTMLVMQPAEA), serve as a signal peptide directing secretion. Positions 66–83 (VAGQIPFDEFMDILHYRP) are excised as a propeptide.

This sequence belongs to the non-disulfide-bridged peptide (NDBP) superfamily. Long chain multifunctional peptide (group 2) family. In terms of tissue distribution, expressed by the venom gland.

Its subcellular location is the secreted. The protein localises to the target cell membrane. In terms of biological role, amphipathic peptide with potent activities against both Gram-positive and Gram-negative bacteria. Is the most active against the two Gram-positive Bacillus megaterium and Micrococcus luteus (MIC=4.0 uM for both). It has relatively low hemolytic activity against human erythrocytes. In Heterometrus spinifer (Asia giant forest scorpion), this protein is Heterin-1.